The primary structure comprises 315 residues: Ribose-phosphate pyrophosphokinase (315 aa).

ATP-binding positions include 37 to 39 (DGE) and 96 to 97 (RQ). Mg(2+) is bound by residues His131 and Asp171. Residue Lys195 is part of the active site. Residues Arg197, Asp221, and 225-229 (DTGGT) contribute to the D-ribose 5-phosphate site.

It belongs to the ribose-phosphate pyrophosphokinase family. Class I subfamily. In terms of assembly, homohexamer. Mg(2+) is required as a cofactor.

The protein resides in the cytoplasm. The enzyme catalyses D-ribose 5-phosphate + ATP = 5-phospho-alpha-D-ribose 1-diphosphate + AMP + H(+). It functions in the pathway metabolic intermediate biosynthesis; 5-phospho-alpha-D-ribose 1-diphosphate biosynthesis; 5-phospho-alpha-D-ribose 1-diphosphate from D-ribose 5-phosphate (route I): step 1/1. Its function is as follows. Involved in the biosynthesis of the central metabolite phospho-alpha-D-ribosyl-1-pyrophosphate (PRPP) via the transfer of pyrophosphoryl group from ATP to 1-hydroxyl of ribose-5-phosphate (Rib-5-P). The chain is Ribose-phosphate pyrophosphokinase from Pasteurella multocida (strain Pm70).